The following is a 673-amino-acid chain: UvrABC system protein B (673 aa).

The 158-residue stretch at 26–183 (EGLEDGLAHQ…RRLAELQYTR (158 aa)) folds into the Helicase ATP-binding domain. 39 to 46 (GVTGSGKT) lines the ATP pocket. Positions 92 to 115 (YYDYYQPEAYVPSSDTFIEKDASV) match the Beta-hairpin motif. Residues 431 to 597 (QVDDLLSEIR…GLNKKVVDIL (167 aa)) form the Helicase C-terminal domain. One can recognise a UVR domain in the interval 633–668 (QQKIHELEGQMMQHAQNLEFEEAAQIRDQLHQLREL).

The protein belongs to the UvrB family. As to quaternary structure, forms a heterotetramer with UvrA during the search for lesions. Interacts with UvrC in an incision complex.

The protein resides in the cytoplasm. In terms of biological role, the UvrABC repair system catalyzes the recognition and processing of DNA lesions. A damage recognition complex composed of 2 UvrA and 2 UvrB subunits scans DNA for abnormalities. Upon binding of the UvrA(2)B(2) complex to a putative damaged site, the DNA wraps around one UvrB monomer. DNA wrap is dependent on ATP binding by UvrB and probably causes local melting of the DNA helix, facilitating insertion of UvrB beta-hairpin between the DNA strands. Then UvrB probes one DNA strand for the presence of a lesion. If a lesion is found the UvrA subunits dissociate and the UvrB-DNA preincision complex is formed. This complex is subsequently bound by UvrC and the second UvrB is released. If no lesion is found, the DNA wraps around the other UvrB subunit that will check the other stand for damage. The sequence is that of UvrABC system protein B from Salmonella arizonae (strain ATCC BAA-731 / CDC346-86 / RSK2980).